Reading from the N-terminus, the 141-residue chain is uncharacterized protein (141 aa).

2 helical membrane-spanning segments follow: residues 20-42 (FLVN…FCLA) and 52-74 (LHLC…IFTL).

Its subcellular location is the cell membrane. This is an uncharacterized protein from Archaeoglobus fulgidus (strain ATCC 49558 / DSM 4304 / JCM 9628 / NBRC 100126 / VC-16).